The primary structure comprises 244 residues: UPF0246 protein FMG_1068 (244 aa).

The protein belongs to the UPF0246 family.

The polypeptide is UPF0246 protein FMG_1068 (Finegoldia magna (strain ATCC 29328 / DSM 20472 / WAL 2508) (Peptostreptococcus magnus)).